Reading from the N-terminus, the 47-residue chain is Boigatoxin-A (47 aa).

A Pyrrolidone carboxylic acid modification is found at glutamine 1. Cystine bridges form between cysteine 10–cysteine 34 and cysteine 13–cysteine 21.

Monomer. As to expression, expressed by the venom gland.

The protein localises to the secreted. Functionally, this toxin may inhibit nicotinic acetylcholine receptor (nAChR). It has poorly reversible postsynaptic blocking activity in a chick muscle preparation and readily reversible inhibitory activity at a presynaptic site in the rat vas deferens prostatic segment most likely to prevent the release of neurotransmitters. In Boiga dendrophila (Mangrove snake), this protein is Boigatoxin-A.